We begin with the raw amino-acid sequence, 445 residues long: Phosphoglucosamine mutase (445 aa).

Ser-102 acts as the Phosphoserine intermediate in catalysis. Positions 102, 241, 243, and 245 each coordinate Mg(2+). The residue at position 102 (Ser-102) is a Phosphoserine.

The protein belongs to the phosphohexose mutase family. Requires Mg(2+) as cofactor. Post-translationally, activated by phosphorylation.

It catalyses the reaction alpha-D-glucosamine 1-phosphate = D-glucosamine 6-phosphate. Its function is as follows. Catalyzes the conversion of glucosamine-6-phosphate to glucosamine-1-phosphate. In Escherichia coli O81 (strain ED1a), this protein is Phosphoglucosamine mutase.